The sequence spans 1108 residues: Topless-related protein 3 (1108 aa).

Residues 4-36 (LSRELVFLILQFLEEEKFKESVHRLEKESGFFF) form the LisH domain. The CTLH domain occupies 34-92 (FFFNTKYFDEKVLAGEWDDVETYLSGFTKVDDNRYSMKIFFEIRKQKYLEALDRQEKAK). Ser214 bears the Phosphoserine mark. WD repeat units lie at residues 343-383 (HQGS…RLVS), 405-444 (ETPI…DLRQ), 450-491 (AHVG…HFTF), 493-534 (GHDA…SRVD), 583-623 (EFQK…VLTS), and 628-667 (GGLP…RSLR). The disordered stretch occupies residues 706-725 (HSQMLNGVDPSKSRIDDSTD). Basic and acidic residues predominate over residues 716-725 (SKSRIDDSTD). 5 WD repeats span residues 751–790 (GSST…QNPS), 818–856 (NLEN…VMTT), 859–899 (PPPP…VKSK), 902–941 (GHQK…KRKS), and 994–1033 (SLSA…LRCR). A disordered region spans residues 1084 to 1108 (GMIPPSEAINSPSTTSNQTPEQLQR). The span at 1091 to 1108 (AINSPSTTSNQTPEQLQR) shows a compositional bias: polar residues.

As to quaternary structure, tetramer. Interacts with NINJA/AFPH2. Interacts with SMXL6. Interacts with SPL (via EAR motif). Interacts with SPEAR3/TIE1.

The protein localises to the nucleus. In terms of biological role, transcriptional corepressor. Negative regulator of jasmonate responses. This is Topless-related protein 3 (TPR3) from Arabidopsis thaliana (Mouse-ear cress).